Here is a 1104-residue protein sequence, read N- to C-terminus: Inhibitory regulator protein BUD2/CLA2 (1104 aa).

Residue serine 2 is modified to N-acetylserine. The C2 domain maps to 316-444 (RSEYLSITGS…RYNKETRLPI (129 aa)). Residues 536–753 (AKIDGTVSRI…NDLLDYIDKM (218 aa)) enclose the Ras-GAP domain. Phosphoserine is present on serine 854. The interval 1027 to 1104 (NPKSSNKTSV…FKKKKETGGS (78 aa)) is disordered. Composition is skewed to polar residues over residues 1029–1043 (KSSN…SSEN) and 1052–1069 (LPNS…SPTK). Positions 1090–1104 (KLTRWFKKKKETGGS) are enriched in basic residues.

Its function is as follows. Stimulates the GTPase activity of BUD1/RSR1. Participates in the regulation of bud-site selection. This is Inhibitory regulator protein BUD2/CLA2 (BUD2) from Saccharomyces cerevisiae (strain ATCC 204508 / S288c) (Baker's yeast).